We begin with the raw amino-acid sequence, 223 residues long: Urease accessory protein UreF (223 aa).

The protein belongs to the UreF family. As to quaternary structure, ureD, UreF and UreG form a complex that acts as a GTP-hydrolysis-dependent molecular chaperone, activating the urease apoprotein by helping to assemble the nickel containing metallocenter of UreC. The UreE protein probably delivers the nickel.

The protein resides in the cytoplasm. Functionally, required for maturation of urease via the functional incorporation of the urease nickel metallocenter. This is Urease accessory protein UreF from Mesorhizobium japonicum (strain LMG 29417 / CECT 9101 / MAFF 303099) (Mesorhizobium loti (strain MAFF 303099)).